The primary structure comprises 150 residues: Cell division protein SepF (150 aa).

The tract at residues 26-45 (DREEIPEEHESKDRTAYQSK) is disordered.

Belongs to the SepF family. As to quaternary structure, homodimer. Interacts with FtsZ.

It localises to the cytoplasm. Functionally, cell division protein that is part of the divisome complex and is recruited early to the Z-ring. Probably stimulates Z-ring formation, perhaps through the cross-linking of FtsZ protofilaments. Its function overlaps with FtsA. This Bacillus licheniformis (strain ATCC 14580 / DSM 13 / JCM 2505 / CCUG 7422 / NBRC 12200 / NCIMB 9375 / NCTC 10341 / NRRL NRS-1264 / Gibson 46) protein is Cell division protein SepF.